An 85-amino-acid chain; its full sequence is Alpha-mammal toxin AaH2 (85 aa).

The signal sequence occupies residues 1–19; it reads MNYLVMISLALLFVTGVES. The LCN-type CS-alpha/beta domain occupies 21-83; sequence KDGYIVDDVN…VRTKGPGRCH (63 aa). 4 cysteine pairs are disulfide-bonded: Cys31–Cys82, Cys35–Cys55, Cys41–Cys65, and Cys45–Cys67. Residue His83 is modified to Histidine amide.

This sequence belongs to the long (4 C-C) scorpion toxin superfamily. Sodium channel inhibitor family. Alpha subfamily. Post-translationally, the amidation of His-83 is not necessary for toxicity. In terms of tissue distribution, expressed by the venom gland.

It localises to the secreted. Functionally, alpha toxin that binds voltage-independently at site-3 of sodium channels (Nav), inhibits the inactivation of the activated channels, and weakly inhibits activation, thereby blocking neuronal transmission. Inserts into voltage-sensing domain IV to stabilize a deactivated state, thereby preventing fast-inactivation. Principally slows the inactivation process of TTX-sensitive sodium channels. It is active on mammalian brain Nav1.2/SCN2A (EC(50)human=0.72 nM, EC(50)rat=2.6 nM), on rat skeletal muscle Nav1.4/SCN4A (EC(50)=2.2 nM), and on human neuronal Nav1.7/SCN9A (EC(50)=6.8-51.7 nM). In vivo, intraplantar injection into mice induces spontaneous pain responses. This is Alpha-mammal toxin AaH2 from Androctonus australis (Sahara scorpion).